We begin with the raw amino-acid sequence, 118 residues long: Ferredoxin-thioredoxin reductase, catalytic chain (118 aa).

Cys57 is a binding site for [4Fe-4S] cluster. Cys59 acts as the Nucleophile in catalysis. Cysteines 59 and 89 form a disulfide. 3 residues coordinate [4Fe-4S] cluster: Cys76, Cys78, and Cys87.

Belongs to the ferredoxin thioredoxin reductase beta subunit family. In terms of assembly, heterodimer of subunit A (variable subunit) and subunit B (catalytic subunit). Heterodimeric FTR forms a complex with ferredoxin and thioredoxin. The cofactor is [4Fe-4S] cluster.

It is found in the plastid. The protein resides in the chloroplast. It catalyses the reaction [thioredoxin]-disulfide + 2 reduced [2Fe-2S]-[ferredoxin] + 2 H(+) = [thioredoxin]-dithiol + 2 oxidized [2Fe-2S]-[ferredoxin]. Functionally, catalytic subunit of the ferredoxin-thioredoxin reductase (FTR), which catalyzes the two-electron reduction of thioredoxins by the electrons provided by reduced ferredoxin. The sequence is that of Ferredoxin-thioredoxin reductase, catalytic chain (ftrB) from Porphyra purpurea (Red seaweed).